Here is a 96-residue protein sequence, read N- to C-terminus: Uteroglobin (96 aa).

The N-terminal stretch at 1–19 is a signal peptide; sequence MKIAITITVLMLSICCSSA.

This sequence belongs to the secretoglobin family. As to quaternary structure, antiparallel homodimer; disulfide-linked. Interaction with LMBR1L is controversial. In terms of tissue distribution, club cells (nonciliated cells of the surface epithelium of the pulmonary airways).

Its subcellular location is the secreted. In terms of biological role, binds phosphatidylcholine, phosphatidylinositol, polychlorinated biphenyls (PCB) and weakly progesterone, potent inhibitor of phospholipase A2. The chain is Uteroglobin (Scgb1a1) from Rattus norvegicus (Rat).